Consider the following 313-residue polypeptide: Ribosomal RNA small subunit methyltransferase H (313 aa).

Residues 35-37 (GGH), Asp55, Phe79, Asp100, and Gln107 contribute to the S-adenosyl-L-methionine site.

The protein belongs to the methyltransferase superfamily. RsmH family.

It localises to the cytoplasm. The enzyme catalyses cytidine(1402) in 16S rRNA + S-adenosyl-L-methionine = N(4)-methylcytidine(1402) in 16S rRNA + S-adenosyl-L-homocysteine + H(+). Specifically methylates the N4 position of cytidine in position 1402 (C1402) of 16S rRNA. This Burkholderia orbicola (strain MC0-3) protein is Ribosomal RNA small subunit methyltransferase H.